We begin with the raw amino-acid sequence, 274 residues long: Formamidopyrimidine-DNA glycosylase (274 aa).

Proline 2 serves as the catalytic Schiff-base intermediate with DNA. Glutamate 3 acts as the Proton donor in catalysis. Lysine 59 acts as the Proton donor; for beta-elimination activity in catalysis. Residues histidine 93, arginine 112, and arginine 155 each contribute to the DNA site. An FPG-type zinc finger spans residues 240–274 (QVYGRTGRPCPRCGQPLERVRLGGRSTHFCPRCQV). Arginine 264 acts as the Proton donor; for delta-elimination activity in catalysis.

Belongs to the FPG family. In terms of assembly, monomer. The cofactor is Zn(2+).

The enzyme catalyses Hydrolysis of DNA containing ring-opened 7-methylguanine residues, releasing 2,6-diamino-4-hydroxy-5-(N-methyl)formamidopyrimidine.. It catalyses the reaction 2'-deoxyribonucleotide-(2'-deoxyribose 5'-phosphate)-2'-deoxyribonucleotide-DNA = a 3'-end 2'-deoxyribonucleotide-(2,3-dehydro-2,3-deoxyribose 5'-phosphate)-DNA + a 5'-end 5'-phospho-2'-deoxyribonucleoside-DNA + H(+). Involved in base excision repair of DNA damaged by oxidation or by mutagenic agents. Acts as a DNA glycosylase that recognizes and removes damaged bases. Has a preference for oxidized purines, such as 7,8-dihydro-8-oxoguanine (8-oxoG). Has AP (apurinic/apyrimidinic) lyase activity and introduces nicks in the DNA strand. Cleaves the DNA backbone by beta-delta elimination to generate a single-strand break at the site of the removed base with both 3'- and 5'-phosphates. The protein is Formamidopyrimidine-DNA glycosylase of Moorella thermoacetica (strain ATCC 39073 / JCM 9320).